Reading from the N-terminus, the 550-residue chain is Undecaprenyl phosphate-alpha-4-amino-4-deoxy-L-arabinose arabinosyl transferase 2 (550 aa).

Helical transmembrane passes span 4–24 (LKPGIGLMCIIALYYLLPLSF), 81–101 (FAVHFGSAFSIALTALMVYWL), 110–132 (WLGLTAAAIYSSCLLVYSIGTYA), 176–196 (FMTKGFLALAVPVLSVLPWVI), 204–224 (VFIYGPLALLGAVATSLPWVI), 255–275 (APFWYYLPVLLAGTLPWLGLL), 288–308 (TQSGAFYLLGWVVMPLLFFSL), 313–333 (LPTYILPSFAPLALLMARYAA), 348–368 (LLFGLLCVITVASVLAPWGLA), 381–401 (VLLGVLGFLVWAAVGGLTLRA), and 409–429 (AALCPLGIALLVGQAIPQQVI).

It belongs to the glycosyltransferase 83 family.

The protein resides in the cell inner membrane. It carries out the reaction 4-amino-4-deoxy-alpha-L-arabinopyranosyl di-trans,octa-cis-undecaprenyl phosphate + lipid IVA = lipid IIA + di-trans,octa-cis-undecaprenyl phosphate.. It functions in the pathway lipopolysaccharide metabolism; 4-amino-4-deoxy-beta-L-arabinose-lipid A biosynthesis. In terms of biological role, catalyzes the transfer of the L-Ara4N moiety of the glycolipid undecaprenyl phosphate-alpha-L-Ara4N to lipid A. The modified arabinose is attached to lipid A and is required for resistance to polymyxin and cationic antimicrobial peptides. This chain is Undecaprenyl phosphate-alpha-4-amino-4-deoxy-L-arabinose arabinosyl transferase 2, found in Sodalis glossinidius (strain morsitans).